Consider the following 311-residue polypeptide: Acyl-CoA dehydrogenase IpdE2 (311 aa).

FAD contacts are provided by Arg-206 and Gly-273.

Belongs to the acyl-CoA dehydrogenase family. Heterotetramer composed of 2 IpdE1 subunits and 2 IpdE2 subunits. The cofactor is FAD.

The catalysed reaction is 3-[(3aS,4S,5R,7aS)-5-hydroxy-7a-methyl-1-oxo-octahydro-1H-inden-4-yl]propanoyl-CoA + A = (2E)-3-[(3aS,4S,5R,7aS)-5-hydroxy-7a-methyl-1-oxo-octahydro-1H-inden-4-yl]prop-2-enoyl-CoA + AH2. It participates in steroid metabolism; cholesterol degradation. In terms of biological role, involved in cholesterol degradation. Catalyzes the dehydrogenation of 5OH-HIP-CoA to 5OH-HIPE-CoA. The chain is Acyl-CoA dehydrogenase IpdE2 from Mycolicibacterium smegmatis (strain ATCC 700084 / mc(2)155) (Mycobacterium smegmatis).